The following is a 316-amino-acid chain: Acetaldehyde dehydrogenase (316 aa).

Residue 11–14 (SGNI) coordinates NAD(+). The active-site Acyl-thioester intermediate is the C131. NAD(+) is bound by residues 162–170 (SAGPGTRAN) and N289.

The protein belongs to the acetaldehyde dehydrogenase family. In terms of assembly, interacts with MhpE.

The catalysed reaction is acetaldehyde + NAD(+) + CoA = acetyl-CoA + NADH + H(+). It participates in aromatic compound metabolism; 3-phenylpropanoate degradation. In terms of biological role, catalyzes the conversion of acetaldehyde to acetyl-CoA, using NAD(+) and coenzyme A. Is the final enzyme in the meta-cleavage pathway for the degradation of aromatic compounds. The protein is Acetaldehyde dehydrogenase of Shigella sonnei (strain Ss046).